Consider the following 115-residue polypeptide: U3-lycotoxin-Ls1l (115 aa).

The first 20 residues, 1 to 20 (MKFVLLFGVLLVTLFSYSSA), serve as a signal peptide directing secretion. The propeptide occupies 21 to 44 (EMLDDFDQADEDELLSLIEKEEAR). 3 disulfides stabilise this stretch: Cys-55–Cys-72, Cys-62–Cys-87, and Cys-74–Cys-85.

This sequence belongs to the neurotoxin 19 (CSTX) family. 01 subfamily. As to expression, expressed by the venom gland.

The protein resides in the secreted. The sequence is that of U3-lycotoxin-Ls1l from Lycosa singoriensis (Wolf spider).